Consider the following 92-residue polypeptide: UPF0213 protein MGAS9429_Spy1198 (92 aa).

A GIY-YIG domain is found at 4-80; it reads KKAYMYVLEC…KRKTRSQKLA (77 aa).

Belongs to the UPF0213 family.

This chain is UPF0213 protein MGAS9429_Spy1198, found in Streptococcus pyogenes serotype M12 (strain MGAS9429).